Consider the following 61-residue polypeptide: Small ribosomal subunit protein uS14 (61 aa).

Zn(2+)-binding residues include cysteine 24, cysteine 27, cysteine 40, and cysteine 43.

Belongs to the universal ribosomal protein uS14 family. Zinc-binding uS14 subfamily. In terms of assembly, part of the 30S ribosomal subunit. Contacts proteins S3 and S10. It depends on Zn(2+) as a cofactor.

Its function is as follows. Binds 16S rRNA, required for the assembly of 30S particles and may also be responsible for determining the conformation of the 16S rRNA at the A site. The sequence is that of Small ribosomal subunit protein uS14 from Clostridium beijerinckii (strain ATCC 51743 / NCIMB 8052) (Clostridium acetobutylicum).